A 969-amino-acid polypeptide reads, in one-letter code: Dual serine/threonine and tyrosine protein kinase (969 aa).

Residues 7–37 are a coiled coil; it reads QEFRRYLRNRNQLQHVLEETQQALELINLEN. In terms of domain architecture, Protein kinase spans 632–894; it reads PHCAEEIGRG…PLLGAIVPVL (263 aa). ATP-binding positions include 638-646 and Lys662; that span reads IGRGQYGIV. The Proton acceptor role is filled by Asp760. Positions 904 to 945 are disordered; sequence SKSLQEVSSDKLQESSTDSRNPALALAEPYNQRGTVVSPPPT.

This sequence belongs to the protein kinase superfamily. Ser/Thr protein kinase family.

It localises to the cytoplasm. It carries out the reaction L-seryl-[protein] + ATP = O-phospho-L-seryl-[protein] + ADP + H(+). It catalyses the reaction L-threonyl-[protein] + ATP = O-phospho-L-threonyl-[protein] + ADP + H(+). The enzyme catalyses L-tyrosyl-[protein] + ATP = O-phospho-L-tyrosyl-[protein] + ADP + H(+). The polypeptide is Dual serine/threonine and tyrosine protein kinase (Apis mellifera (Honeybee)).